Consider the following 363-residue polypeptide: LIM and cysteine-rich domains protein 1 (363 aa).

Position 16 is a phosphoserine (Ser-16). Residues 99–206 (MIMTNPIATG…GEVALPGQGG (108 aa)) enclose the PET domain. The tract at residues 200–233 (ALPGQGGLPKEEGKQQEKPEGAETAAPTANGSLG) is disordered. Positions 208-220 (PKEEGKQQEKPEG) are enriched in basic and acidic residues. LIM zinc-binding domains follow at residues 239–304 (YVCE…SLRP) and 305–363 (RCSG…SKRT).

In terms of assembly, interacts with beta-dystroglycan. Interacts with GATA1, GATA4 and GATA6. As to expression, highly expressed in both skeletal muscle and cardiac muscle.

It localises to the cytoplasm. It is found in the nucleus. Transcriptional cofactor that restricts GATA6 function by inhibiting DNA-binding, resulting in repression of GATA6 transcriptional activation of downstream target genes. Represses GATA6-mediated trans activation of lung- and cardiac tissue-specific promoters. Inhibits DNA-binding by GATA4 and GATA1 to the cTNC promoter. Plays a critical role in the development of cardiac hypertrophy via activation of calcineurin/nuclear factor of activated T-cells signaling pathway. In Sus scrofa (Pig), this protein is LIM and cysteine-rich domains protein 1 (LMCD1).